A 130-amino-acid chain; its full sequence is Small ribosomal subunit protein uS8 (130 aa).

It belongs to the universal ribosomal protein uS8 family. As to quaternary structure, part of the 30S ribosomal subunit. Contacts proteins S5 and S12.

In terms of biological role, one of the primary rRNA binding proteins, it binds directly to 16S rRNA central domain where it helps coordinate assembly of the platform of the 30S subunit. The chain is Small ribosomal subunit protein uS8 from Aliivibrio fischeri (strain MJ11) (Vibrio fischeri).